A 348-amino-acid chain; its full sequence is Phenylalanine--tRNA ligase alpha subunit (348 aa).

Glu-268 contacts Mg(2+).

Belongs to the class-II aminoacyl-tRNA synthetase family. Phe-tRNA synthetase alpha subunit type 1 subfamily. In terms of assembly, tetramer of two alpha and two beta subunits. The cofactor is Mg(2+).

It localises to the cytoplasm. It carries out the reaction tRNA(Phe) + L-phenylalanine + ATP = L-phenylalanyl-tRNA(Phe) + AMP + diphosphate + H(+). This is Phenylalanine--tRNA ligase alpha subunit from Bordetella parapertussis (strain 12822 / ATCC BAA-587 / NCTC 13253).